Here is a 439-residue protein sequence, read N- to C-terminus: Dihydroorotase (439 aa).

2 residues coordinate Zn(2+): H65 and H67. Residues 67-69 (HFR) and N99 contribute to the substrate site. Positions 156, 183, 246, and 321 each coordinate Zn(2+). The active site involves D321. Substrate-binding positions include H325 and 339–340 (FG).

The protein belongs to the metallo-dependent hydrolases superfamily. DHOase family. Class I DHOase subfamily. The cofactor is Zn(2+).

It carries out the reaction (S)-dihydroorotate + H2O = N-carbamoyl-L-aspartate + H(+). Its pathway is pyrimidine metabolism; UMP biosynthesis via de novo pathway; (S)-dihydroorotate from bicarbonate: step 3/3. In terms of biological role, catalyzes the reversible cyclization of carbamoyl aspartate to dihydroorotate. This is Dihydroorotase from Chlorobaculum tepidum (strain ATCC 49652 / DSM 12025 / NBRC 103806 / TLS) (Chlorobium tepidum).